The chain runs to 406 residues: Enoyl-[acyl-carrier-protein] reductase [NADH] (406 aa).

NAD(+)-binding positions include 48–53 (GASTGF), 74–75 (FE), 111–112 (DA), and 140–141 (IA). A substrate-binding site is contributed by tyrosine 226. Tyrosine 236 serves as the catalytic Proton donor. NAD(+)-binding positions include lysine 245 and 275-277 (LVT).

This sequence belongs to the TER reductase family. As to quaternary structure, monomer.

The catalysed reaction is a 2,3-saturated acyl-[ACP] + NAD(+) = a (2E)-enoyl-[ACP] + NADH + H(+). It functions in the pathway lipid metabolism; fatty acid biosynthesis. Functionally, involved in the final reduction of the elongation cycle of fatty acid synthesis (FAS II). Catalyzes the reduction of a carbon-carbon double bond in an enoyl moiety that is covalently linked to an acyl carrier protein (ACP). This chain is Enoyl-[acyl-carrier-protein] reductase [NADH], found in Coxiella burnetii (strain RSA 331 / Henzerling II).